Consider the following 282-residue polypeptide: V-set domain-containing T-cell activation inhibitor 1 (282 aa).

The N-terminal stretch at 1 to 24 is a signal peptide; sequence MASLGQILFWSIISIIIILAGAIA. At 25 to 259 the chain is on the extracellular side; sequence LIIGFGISGR…HLQLLNSKAS (235 aa). 2 Ig-like V-type domains span residues 35 to 146 and 153 to 241; these read HSIT…LEYK and PEVN…IKVT. Disulfide bonds link Cys56/Cys130 and Cys168/Cys225. N-linked (GlcNAc...) asparagine glycosylation is present at Asn216. The helical transmembrane segment at 260-280 threads the bilayer; sequence LCVSSFFAISWALLPLSPYLM. Over 281 to 282 the chain is Cytoplasmic; it reads LK.

The protein belongs to the immunoglobulin superfamily. BTN/MOG family. In terms of processing, N-glycosylated. As to expression, overexpressed in breast, ovarian, endometrial, renal cell (RCC) and non-small-cell lung cancers (NSCLC). Expressed on activated T- and B-cells, monocytes and dendritic cells, but not expressed in most normal tissues (at protein level). Widely expressed, including in kidney, liver, lung, ovary, placenta, spleen and testis.

It localises to the cell membrane. Negatively regulates T-cell-mediated immune response by inhibiting T-cell activation, proliferation, cytokine production and development of cytotoxicity. When expressed on the cell surface of tumor macrophages, plays an important role, together with regulatory T-cells (Treg), in the suppression of tumor-associated antigen-specific T-cell immunity. Involved in promoting epithelial cell transformation. In Homo sapiens (Human), this protein is V-set domain-containing T-cell activation inhibitor 1.